A 227-amino-acid polypeptide reads, in one-letter code: MAHAAQVGLQDATSPIMEELIIFHDHALMIIFLICFLVLYALFLTLTTKLTNTSISDAQEMETVWTILPAIILVLIALPSLRILYMTDEVNDPSFTIKSIGHQWYWTYEYTDYGGLIFNSYMLPPLFLEPGDLRLLDVDNRVVLPVEAPVRMMITSQDVLHSWAVPTLGLKTDAIPGRLNQTTFTATRPGVYYGQCSEICGANHSFMPIVLELIPLKIFEMGPVFTL.

Topologically, residues 1-14 (MAHAAQVGLQDATS) are mitochondrial intermembrane. A helical membrane pass occupies residues 15 to 45 (PIMEELIIFHDHALMIIFLICFLVLYALFLT). Over 46–59 (LTTKLTNTSISDAQ) the chain is Mitochondrial matrix. Residues 60 to 87 (EMETVWTILPAIILVLIALPSLRILYMT) traverse the membrane as a helical segment. Topologically, residues 88 to 227 (DEVNDPSFTI…IFEMGPVFTL (140 aa)) are mitochondrial intermembrane. Positions 161, 196, 198, 200, 204, and 207 each coordinate Cu cation. E198 lines the Mg(2+) pocket.

The protein belongs to the cytochrome c oxidase subunit 2 family. As to quaternary structure, component of the cytochrome c oxidase (complex IV, CIV), a multisubunit enzyme composed of 14 subunits. The complex is composed of a catalytic core of 3 subunits MT-CO1, MT-CO2 and MT-CO3, encoded in the mitochondrial DNA, and 11 supernumerary subunits COX4I, COX5A, COX5B, COX6A, COX6B, COX6C, COX7A, COX7B, COX7C, COX8 and NDUFA4, which are encoded in the nuclear genome. The complex exists as a monomer or a dimer and forms supercomplexes (SCs) in the inner mitochondrial membrane with NADH-ubiquinone oxidoreductase (complex I, CI) and ubiquinol-cytochrome c oxidoreductase (cytochrome b-c1 complex, complex III, CIII), resulting in different assemblies (supercomplex SCI(1)III(2)IV(1) and megacomplex MCI(2)III(2)IV(2)). Found in a complex with TMEM177, COA6, COX18, COX20, SCO1 and SCO2. Interacts with TMEM177 in a COX20-dependent manner. Interacts with COX20. Interacts with COX16. Cu cation serves as cofactor.

Its subcellular location is the mitochondrion inner membrane. It carries out the reaction 4 Fe(II)-[cytochrome c] + O2 + 8 H(+)(in) = 4 Fe(III)-[cytochrome c] + 2 H2O + 4 H(+)(out). Its function is as follows. Component of the cytochrome c oxidase, the last enzyme in the mitochondrial electron transport chain which drives oxidative phosphorylation. The respiratory chain contains 3 multisubunit complexes succinate dehydrogenase (complex II, CII), ubiquinol-cytochrome c oxidoreductase (cytochrome b-c1 complex, complex III, CIII) and cytochrome c oxidase (complex IV, CIV), that cooperate to transfer electrons derived from NADH and succinate to molecular oxygen, creating an electrochemical gradient over the inner membrane that drives transmembrane transport and the ATP synthase. Cytochrome c oxidase is the component of the respiratory chain that catalyzes the reduction of oxygen to water. Electrons originating from reduced cytochrome c in the intermembrane space (IMS) are transferred via the dinuclear copper A center (CU(A)) of subunit 2 and heme A of subunit 1 to the active site in subunit 1, a binuclear center (BNC) formed by heme A3 and copper B (CU(B)). The BNC reduces molecular oxygen to 2 water molecules using 4 electrons from cytochrome c in the IMS and 4 protons from the mitochondrial matrix. This chain is Cytochrome c oxidase subunit 2 (MT-CO2), found in Pan troglodytes (Chimpanzee).